We begin with the raw amino-acid sequence, 264 residues long: Thymidylate synthase (264 aa).

Arg21 contacts dUMP. His51 serves as a coordination point for (6R)-5,10-methylene-5,6,7,8-tetrahydrofolate. 126 to 127 (RR) lines the dUMP pocket. Cys146 acts as the Nucleophile in catalysis. Residues 166-169 (RSCD), Asn177, and 207-209 (HLY) each bind dUMP. Asp169 is a binding site for (6R)-5,10-methylene-5,6,7,8-tetrahydrofolate. Ala263 contributes to the (6R)-5,10-methylene-5,6,7,8-tetrahydrofolate binding site.

The protein belongs to the thymidylate synthase family. Bacterial-type ThyA subfamily. In terms of assembly, homodimer.

It is found in the cytoplasm. The enzyme catalyses dUMP + (6R)-5,10-methylene-5,6,7,8-tetrahydrofolate = 7,8-dihydrofolate + dTMP. It participates in pyrimidine metabolism; dTTP biosynthesis. Catalyzes the reductive methylation of 2'-deoxyuridine-5'-monophosphate (dUMP) to 2'-deoxythymidine-5'-monophosphate (dTMP) while utilizing 5,10-methylenetetrahydrofolate (mTHF) as the methyl donor and reductant in the reaction, yielding dihydrofolate (DHF) as a by-product. This enzymatic reaction provides an intracellular de novo source of dTMP, an essential precursor for DNA biosynthesis. This chain is Thymidylate synthase, found in Cronobacter sakazakii (strain ATCC BAA-894) (Enterobacter sakazakii).